We begin with the raw amino-acid sequence, 348 residues long: D-erythrose-4-phosphate dehydrogenase (348 aa).

Residues 12 to 13 and R81 each bind NAD(+); that span reads RI. Substrate contacts are provided by residues 154-156, R200, 213-214, and R236; these read SCT and TK. C155 functions as the Nucleophile in the catalytic mechanism. N318 serves as a coordination point for NAD(+).

Belongs to the glyceraldehyde-3-phosphate dehydrogenase family. Epd subfamily. In terms of assembly, homotetramer.

It is found in the cytoplasm. The enzyme catalyses D-erythrose 4-phosphate + NAD(+) + H2O = 4-phospho-D-erythronate + NADH + 2 H(+). It functions in the pathway cofactor biosynthesis; pyridoxine 5'-phosphate biosynthesis; pyridoxine 5'-phosphate from D-erythrose 4-phosphate: step 1/5. In terms of biological role, catalyzes the NAD-dependent conversion of D-erythrose 4-phosphate to 4-phosphoerythronate. This Salmonella paratyphi A (strain ATCC 9150 / SARB42) protein is D-erythrose-4-phosphate dehydrogenase.